The following is a 686-amino-acid chain: Potassium-transporting ATPase ATP-binding subunit (686 aa).

2 consecutive transmembrane segments (helical) span residues 38–58 (VMFVVWAGSLLTTVLVVKDLV) and 64–84 (AAPLGFTVQVTLWLWFTVLFA). Residues 101–123 (ALRKMRKETTARRWKDGREERVP) are disordered. The span at 107–123 (KETTARRWKDGREERVP) shows a compositional bias: basic and acidic residues. The next 2 membrane-spanning stretches (helical) occupy residues 224–244 (ILLVGLTLIFLLACVTLVPLA) and 257–277 (VALLVCLIPTTIGGLLSAIGI). The active-site 4-aspartylphosphate intermediate is the Asp-308. Residues Asp-345, Glu-349, 378–385 (FTAQTRMS), and Lys-399 contribute to the ATP site. Residues Asp-522 and Asp-526 each coordinate Mg(2+). 3 helical membrane-spanning segments follow: residues 592–612 (FAILPALFMGVFPQIAPLNVM), 620–640 (AVLSAVIFNALIIILLIPLAL), and 666–686 (VIVPFVGIKVIDVLLGAVGLA).

This sequence belongs to the cation transport ATPase (P-type) (TC 3.A.3) family. Type IA subfamily. As to quaternary structure, the system is composed of three essential subunits: KdpA, KdpB and KdpC.

The protein resides in the cell membrane. The catalysed reaction is K(+)(out) + ATP + H2O = K(+)(in) + ADP + phosphate + H(+). In terms of biological role, part of the high-affinity ATP-driven potassium transport (or Kdp) system, which catalyzes the hydrolysis of ATP coupled with the electrogenic transport of potassium into the cytoplasm. This subunit is responsible for energy coupling to the transport system and for the release of the potassium ions to the cytoplasm. The polypeptide is Potassium-transporting ATPase ATP-binding subunit (Myxococcus xanthus).